Reading from the N-terminus, the 612-residue chain is Dihydroxy-acid dehydratase (612 aa).

Position 81 (aspartate 81) interacts with Mg(2+). Cysteine 122 provides a ligand contact to [2Fe-2S] cluster. Residues aspartate 123 and lysine 124 each coordinate Mg(2+). Lysine 124 carries the N6-carboxylysine modification. Cysteine 195 lines the [2Fe-2S] cluster pocket. Glutamate 491 is a binding site for Mg(2+). Serine 517 serves as the catalytic Proton acceptor.

The protein belongs to the IlvD/Edd family. As to quaternary structure, homodimer. It depends on [2Fe-2S] cluster as a cofactor. Mg(2+) is required as a cofactor.

It carries out the reaction (2R)-2,3-dihydroxy-3-methylbutanoate = 3-methyl-2-oxobutanoate + H2O. The catalysed reaction is (2R,3R)-2,3-dihydroxy-3-methylpentanoate = (S)-3-methyl-2-oxopentanoate + H2O. The protein operates within amino-acid biosynthesis; L-isoleucine biosynthesis; L-isoleucine from 2-oxobutanoate: step 3/4. It functions in the pathway amino-acid biosynthesis; L-valine biosynthesis; L-valine from pyruvate: step 3/4. Functions in the biosynthesis of branched-chain amino acids. Catalyzes the dehydration of (2R,3R)-2,3-dihydroxy-3-methylpentanoate (2,3-dihydroxy-3-methylvalerate) into 2-oxo-3-methylpentanoate (2-oxo-3-methylvalerate) and of (2R)-2,3-dihydroxy-3-methylbutanoate (2,3-dihydroxyisovalerate) into 2-oxo-3-methylbutanoate (2-oxoisovalerate), the penultimate precursor to L-isoleucine and L-valine, respectively. The chain is Dihydroxy-acid dehydratase from Psychromonas ingrahamii (strain DSM 17664 / CCUG 51855 / 37).